Reading from the N-terminus, the 113-residue chain is MEIIMIFVCGILASISVYLVLSKSLIRIVMGTTLITHASNLFLITMGGLKHGEMPIYEKNISQYVDPIPHALILTAIVIAFATTAFFLVLAFRTYKELGTDNVERMKGVLDDD.

A run of 3 helical transmembrane segments spans residues 1-21, 28-48, and 72-92; these read MEII…YLVL, IVMG…TMGG, and LILT…VLAF.

Belongs to the CPA3 antiporters (TC 2.A.63) subunit C family. As to quaternary structure, may form a heterooligomeric complex that consists of seven subunits: mnhA1, mnhB1, mnhC1, mnhD1, mnhE1, mnhF1 and mnhG1.

The protein resides in the cell membrane. In terms of biological role, mnh complex is a Na(+)/H(+) antiporter involved in Na(+) excretion. The protein is Na(+)/H(+) antiporter subunit C1 (mnhC1) of Staphylococcus haemolyticus (strain JCSC1435).